The chain runs to 294 residues: IVFRAAQERSDIEIVAINDLLDAEYMAYMLKYDSTHGRFNGSVEVKDGHLVVNGQTIRVTAEKDPANLKWNEVGVDVVAEATGIFLTDETARKHIAAGAKKVVLTGPSKDDTPMFVMGVNLKSYAGQEIVSNASCTTNCLAPLAKVINDKFGIVEALMTTVHATTATQKTVDGPFHKDWRGGRGASQNIIPSSTGAAKAVGKVIPELNGKLTGMAFRVPTPNVSVVDLTARLEKPASYKEVCAAIKEAAEGELKGVLGYTEDDVVSTDFNGEKLTSVFDAKAGIALNDNFVKLV.

Residues Asp-19, Lys-63, and Thr-105 each coordinate NAD(+). D-glyceraldehyde 3-phosphate is bound by residues 134 to 136 (SCT), Thr-165, 194 to 195 (TG), and Arg-217. The active-site Nucleophile is the Cys-135.

This sequence belongs to the glyceraldehyde-3-phosphate dehydrogenase family. As to quaternary structure, homotetramer.

Its subcellular location is the cytoplasm. The enzyme catalyses D-glyceraldehyde 3-phosphate + phosphate + NAD(+) = (2R)-3-phospho-glyceroyl phosphate + NADH + H(+). It functions in the pathway carbohydrate degradation; glycolysis; pyruvate from D-glyceraldehyde 3-phosphate: step 1/5. Its function is as follows. Catalyzes the oxidative phosphorylation of glyceraldehyde 3-phosphate (G3P) to 1,3-bisphosphoglycerate (BPG) using the cofactor NAD. The first reaction step involves the formation of a hemiacetal intermediate between G3P and a cysteine residue, and this hemiacetal intermediate is then oxidized to a thioester, with concomitant reduction of NAD to NADH. The reduced NADH is then exchanged with the second NAD, and the thioester is attacked by a nucleophilic inorganic phosphate to produce BPG. The polypeptide is Glyceraldehyde-3-phosphate dehydrogenase (gap) (Serratia odorifera).